We begin with the raw amino-acid sequence, 323 residues long: Acetyl-coenzyme A carboxylase carboxyl transferase subunit alpha (323 aa).

Positions 35 to 296 constitute a CoA carboxyltransferase C-terminal domain; the sequence is EVLSELDELR…GMTLKKCLDE (262 aa).

It belongs to the AccA family. As to quaternary structure, acetyl-CoA carboxylase is a heterohexamer composed of biotin carboxyl carrier protein (AccB), biotin carboxylase (AccC) and two subunits each of ACCase subunit alpha (AccA) and ACCase subunit beta (AccD).

The protein localises to the cytoplasm. The enzyme catalyses N(6)-carboxybiotinyl-L-lysyl-[protein] + acetyl-CoA = N(6)-biotinyl-L-lysyl-[protein] + malonyl-CoA. The protein operates within lipid metabolism; malonyl-CoA biosynthesis; malonyl-CoA from acetyl-CoA: step 1/1. Component of the acetyl coenzyme A carboxylase (ACC) complex. First, biotin carboxylase catalyzes the carboxylation of biotin on its carrier protein (BCCP) and then the CO(2) group is transferred by the carboxyltransferase to acetyl-CoA to form malonyl-CoA. The protein is Acetyl-coenzyme A carboxylase carboxyl transferase subunit alpha of Aquifex aeolicus (strain VF5).